The chain runs to 160 residues: Cytochrome b6-f complex subunit 4 (160 aa).

The next 3 helical transmembrane spans lie at 36–56, 95–115, and 131–151; these read LLYIFPVVILGTIACNVGLAV, LLGVLLMVSVPVGLLTVPFLE, and TVFLIGTAVALWLGIGATLPI.

It belongs to the cytochrome b family. PetD subfamily. The 4 large subunits of the cytochrome b6-f complex are cytochrome b6, subunit IV (17 kDa polypeptide, petD), cytochrome f and the Rieske protein, while the 4 small subunits are petG, petL, petM and petN. The complex functions as a dimer.

The protein localises to the plastid. It is found in the chloroplast thylakoid membrane. Functionally, component of the cytochrome b6-f complex, which mediates electron transfer between photosystem II (PSII) and photosystem I (PSI), cyclic electron flow around PSI, and state transitions. The chain is Cytochrome b6-f complex subunit 4 from Daucus carota (Wild carrot).